We begin with the raw amino-acid sequence, 380 residues long: Probable inactive dehydrogenase easA (380 aa).

Residues 25 to 27 (PMT), A60, Q102, and H171 each bind FMN. Residues H171 and N174 each coordinate substrate. Residues K223, G299, 324–325 (GR), and R325 contribute to the FMN site. Y352 is a binding site for substrate.

This sequence belongs to the NADH:flavin oxidoreductase/NADH oxidase family.

Its function is as follows. Probable inactive dehydrogenase; part of the gene cluster that mediates the biosynthesis of fungal ergot alkaloid. DmaW catalyzes the first step of ergot alkaloid biosynthesis by condensing dimethylallyl diphosphate (DMAP) and tryptophan to form 4-dimethylallyl-L-tryptophan. The second step is catalyzed by the methyltransferase easF that methylates 4-dimethylallyl-L-tryptophan in the presence of S-adenosyl-L-methionine, resulting in the formation of 4-dimethylallyl-L-abrine. The catalase easC and the FAD-dependent oxidoreductase easE then transform 4-dimethylallyl-L-abrine to chanoclavine-I which is further oxidized by easD in the presence of NAD(+), resulting in the formation of chanoclavine-I aldehyde. Agroclavine dehydrogenase easG then mediates the conversion of chanoclavine-I aldehyde to agroclavine via a non-enzymatic adduct reaction: the substrate is an iminium intermediate that is formed spontaneously from chanoclavine-I aldehyde in the presence of glutathione. The presence of easA is not required to complete this reaction. Further conversion of agroclavine to paspalic acid is a two-step process involving oxidation of agroclavine to elymoclavine and of elymoclavine to paspalic acid, the second step being performed by the elymoclavine oxidase cloA. Paspalic acid is then further converted to D-lysergic acid. Ergopeptines are assembled from D-lysergic acid and three different amino acids by the D-lysergyl-peptide-synthetases composed each of a monomudular and a trimodular nonribosomal peptide synthetase subunit. LpsB and lpsC encode the monomodular subunits responsible for D-lysergic acid activation and incorporation into the ergopeptine backbone. LpsA1 and A2 subunits encode the trimodular nonribosomal peptide synthetase assembling the tripeptide portion of ergopeptines. LpsA1 is responsible for formation of the major ergopeptine, ergotamine, and lpsA2 for alpha-ergocryptine, the minor ergopeptine of the total alkaloid mixture elaborated by C.purpurea. D-lysergyl-tripeptides are assembled by the nonribosomal peptide synthetases and released as N-(D-lysergyl-aminoacyl)-lactams. Cyclolization of the D-lysergyl-tripeptides is performed by the Fe(2+)/2-ketoglutarate-dependent dioxygenase easH which introduces a hydroxyl group into N-(D-lysergyl-aminoacyl)-lactam at alpha-C of the aminoacyl residue followed by spontaneous condensation with the terminal lactam carbonyl group. The chain is Probable inactive dehydrogenase easA from Claviceps purpurea (Ergot fungus).